A 418-amino-acid polypeptide reads, in one-letter code: Beta-2 adrenergic receptor (418 aa).

The Extracellular segment spans residues 1–34; the sequence is MGQPGNRSVFLLAPNGSHAPDQDVPQERDEAWVV. N-linked (GlcNAc...) asparagine glycosylation is found at N6 and N15. Residues 35–58 form a helical membrane-spanning segment; sequence GMAIVMSLIVLAIVFGNVLVITAI. Residues 59-71 lie on the Cytoplasmic side of the membrane; that stretch reads AKFERLQTVTNYF. A helical membrane pass occupies residues 72 to 95; it reads ITSLACADLVMGLAVVPFGASHIL. Topologically, residues 96 to 106 are extracellular; the sequence is MKMWTFGSFWC. 2 disulfide bridges follow: C106–C191 and C184–C190. A helical membrane pass occupies residues 107 to 129; sequence EFWISIDVLCVTASIETLCVIAV. Residues 130 to 150 lie on the Cytoplasmic side of the membrane; sequence DRYLAITSPFKYQCLLTKNKA. Position 141 is a phosphotyrosine (Y141). Residues 151-174 form a helical membrane-spanning segment; the sequence is RVVILMVWVVSGLISFLPIKMHWY. Residues 175–196 lie on the Extracellular side of the membrane; sequence QATHREALNCYAEEACCDFFTN. The helical transmembrane segment at 197–220 threads the bilayer; that stretch reads QPYAIASSIVSFYLPLVVMVFVYS. At 221–274 the chain is on the cytoplasmic side; the sequence is RVFQVARRQLQKIDKSEGRFHAQNLSQAEQDGRSGPGHRRSSKFCLKEHKALKT. S246 is modified (phosphoserine). S261 and S262 each carry phosphoserine; by PKA. A lipid anchor (S-palmitoyl cysteine) is attached at C265. The helical transmembrane segment at 275-298 threads the bilayer; that stretch reads LGIIMGTFTLCWLPFFIVNIVHGI. Topologically, residues 299 to 305 are extracellular; sequence HDNLIPK. A helical membrane pass occupies residues 306–329; the sequence is EVYILLNWVGYVNSAFNPLIYCRS. Topologically, residues 330-418 are cytoplasmic; sequence PDFRMAFQEL…RNCSTNDSML (89 aa). C341 is lipidated: S-palmitoyl cysteine. Residues S345 and S346 each carry the phosphoserine; by PKA modification. S355 and S356 each carry phosphoserine; by BARK. The disordered stretch occupies residues 381 to 418; it reads RLCEDAPGPEGCAHRQGTVPDDSTDSQGRNCSTNDSML. 4-hydroxyproline occurs at positions 387 and 400. The segment covering 405 to 418 has biased composition (polar residues); it reads DSQGRNCSTNDSML. The PDZ-binding signature appears at 415 to 418; the sequence is DSML.

The protein belongs to the G-protein coupled receptor 1 family. Adrenergic receptor subfamily. ADRB2 sub-subfamily. As to quaternary structure, binds NHERF1 and GPRASP1. Interacts with ARRB1 and ARRB2. Interacts with SRC. Interacts with USP20 and USP33. Interacts with VHL; the interaction, which is increased on hydroxylation of ADRB2, ubiquitinates ADRB2 leading to its degradation. Interacts with EGLN3; the interaction hydroxylates ADRB2 facilitating VHL-E3 ligase-mediated ubiquitination. Interacts (via PDZ-binding motif) with SNX27 (via PDZ domain); the interaction is required when endocytosed to prevent degradation in lysosomes and promote recycling to the plasma membrane. Interacts with CNIH4. Interacts with ARRDC3. Interacts with NEDD4. Interacts with MARCHF2. In terms of processing, palmitoylated; may reduce accessibility of Ser-345 and Ser-346 by anchoring Cys-341 to the plasma membrane. Agonist stimulation promotes depalmitoylation and further allows Ser-345 and Ser-346 phosphorylation. Phosphorylated by PKA and BARK upon agonist stimulation, which mediates homologous desensitization of the receptor. PKA-mediated phosphorylation seems to facilitate phosphorylation by BARK. Post-translationally, phosphorylation of Tyr-141 is induced by insulin and leads to supersensitization of the receptor. In terms of processing, polyubiquitinated. Agonist-induced ubiquitination leads to sort internalized receptors to the lysosomes for degradation. Deubiquitination by USP20 and USP33, leads to ADRB2 recycling and resensitization after prolonged agonist stimulation. USP20 and USP33 are constitutively associated and are dissociated immediately after agonist stimulation. Ubiquitination by the VHL-E3 ligase complex is oxygen-dependent. Hydroxylation by EGLN3 occurs only under normoxia and increases the interaction with VHL and the subsequent ubiquitination and degradation of ADRB2. Post-translationally, palmitoylated. Mainly palmitoylated at Cys-341. Palmitoylation may reduce accessibility of phosphorylation sites by anchoring the receptor to the plasma membrane. Agonist stimulation promotes depalmitoylation and further allows Ser-345 and Ser-346 phosphorylation. Also undergoes transient, ligand-induced palmitoylation at Cys-265 probably by ZDHHC9, ZDHHC14 and ZDHHC18 within the Golgi. Palmitoylation at Cys-265 requires phosphorylation by PKA and receptor internalization and stabilizes the receptor. Could be depalmitoylated by LYPLA1 at the plasma membrane. As to expression, expressed in heart, liver, lung, skeletal muscle and subcutaneous adipose tissue.

Its subcellular location is the cell membrane. The protein resides in the early endosome. It localises to the golgi apparatus. Functionally, beta-adrenergic receptors mediate the catecholamine-induced activation of adenylate cyclase through the action of G proteins. The beta-2-adrenergic receptor binds epinephrine with an approximately 30-fold greater affinity than it does norepinephrine. The protein is Beta-2 adrenergic receptor (ADRB2) of Sus scrofa (Pig).